The following is a 136-amino-acid chain: ATP synthase epsilon chain (136 aa).

The protein belongs to the ATPase epsilon chain family. F-type ATPases have 2 components, CF(1) - the catalytic core - and CF(0) - the membrane proton channel. CF(1) has five subunits: alpha(3), beta(3), gamma(1), delta(1), epsilon(1). CF(0) has three main subunits: a, b and c.

Its subcellular location is the cell inner membrane. Its function is as follows. Produces ATP from ADP in the presence of a proton gradient across the membrane. This Afipia carboxidovorans (strain ATCC 49405 / DSM 1227 / KCTC 32145 / OM5) (Oligotropha carboxidovorans) protein is ATP synthase epsilon chain.